The sequence spans 420 residues: MRWRIIQVQYCFLLVPCMLTALEAVPIDVDKTKVHNTEPVENARIEPPDTGLYYDEYLKQVIEVLETDPHFREKLQKADIEEIRSGRLSQELDLVSHKVRTRLDELKRQEVGRLRMLIKAKLDALQDTGMNHHLLLKQFEHLNHQNPNTFESRDLDMLIKAATADLEQYDRTRHEEFKKYEMMKEHERREYLKTLSEEKRKEEESKFEEMKRKHEDHPKVNHPGSKDQLKEVWEETDGLDPNDFDPKTFFKLHDVNNDGFLDEQELEALFTRELEKVYNPQNAEDDMIEMEEERLRMREHVMSEIDNNKDRLVTLEEFLRATEKKEFLEPDSWETLDQQQLFTEDELKEYESIIAIQENELKKRAEELQKQKEDLQRQHDHLEAQKQEYHQAVQHLEQKKLQQGIAPSGPAGELKFEPHT.

The N-terminal stretch at 1-24 is a signal peptide; it reads MRWRIIQVQYCFLLVPCMLTALEA. Residues 171–223 mediate DNA binding; sequence RTRHEEFKKYEMMKEHERREYLKTLSEEKRKEEESKFEEMKRKHEDHPKVNHP. Positions 193–225 are disordered; sequence KTLSEEKRKEEESKFEEMKRKHEDHPKVNHPGS. The segment at 213 to 420 is binds to necdin; that stretch reads KHEDHPKVNH…AGELKFEPHT (208 aa). 2 consecutive EF-hand domains span residues 241–276 and 293–328; these read PNDF…ELEK and ERLR…KEFL. Positions 254, 256, 258, 265, 306, 308, 310, and 317 each coordinate Ca(2+). A GBA motif is present at residues 304 to 334; the sequence is EIDNNKDRLVTLEEFLRATEKKEFLEPDSWE. Serine 332 bears the Phosphoserine mark. Residues 365–389 are compositionally biased toward basic and acidic residues; it reads AEELQKQKEDLQRQHDHLEAQKQEY. The tract at residues 365-420 is disordered; the sequence is AEELQKQKEDLQRQHDHLEAQKQEYHQAVQHLEQKKLQQGIAPSGPAGELKFEPHT.

The protein belongs to the nucleobindin family. In terms of assembly, interacts (via GBA motif) with guanine nucleotide-binding protein G(i) alpha subunit GNAI3. Preferentially interacts with inactive rather than active GNAI3. Interaction with GNAI3 is inhibited when NUCB2 binds calcium, probably due to a conformational change which renders the GBA motif inaccessible. Binds to the postmitotic growth suppressor NDN; coexpression abolishes NUCB2 secretion. Interacts with MC4R. As to expression, found in liver, heart, thymus, muscle, intestine, kidney, lung, spleen and throughout the brain, in cerebral cortex, hippocampus, hypothalamus and medulla oblongata. Nucb2 and necdin levels were higher in postmitotic neurons.

It is found in the cytoplasm. The protein resides in the perikaryon. The protein localises to the endoplasmic reticulum. It localises to the golgi apparatus. Its subcellular location is the nucleus envelope. It is found in the membrane. The protein resides in the secreted. Its function is as follows. Calcium-binding protein which may have a role in calcium homeostasis. Acts as a non-receptor guanine nucleotide exchange factor which binds to and activates guanine nucleotide-binding protein (G-protein) alpha subunit GNAI3. In terms of biological role, anorexigenic peptide, seems to play an important role in hypothalamic pathways regulating food intake and energy homeostasis, acting in a leptin-independent manner. May also exert hypertensive roles and modulate blood pressure through directly acting on peripheral arterial resistance. In intestinal epithelial cells, plays a role in the inhibition of hepatic glucose production via MC4R receptor leading to increased cyclic adenosine monophosphate (cAMP) levels and glucagon-like peptide 1 (GLP-1) secretion. This Mus musculus (Mouse) protein is Nucleobindin-2 (Nucb2).